Here is a 274-residue protein sequence, read N- to C-terminus: NH(3)-dependent NAD(+) synthetase (274 aa).

46–53 serves as a coordination point for ATP; sequence GISGGQDS. Mg(2+) is bound at residue D52. Residue R140 participates in deamido-NAD(+) binding. T160 lines the ATP pocket. Position 165 (E165) interacts with Mg(2+). K173 and D180 together coordinate deamido-NAD(+). ATP contacts are provided by K189 and T211. A deamido-NAD(+)-binding site is contributed by 260–261; the sequence is HK.

It belongs to the NAD synthetase family. In terms of assembly, homodimer.

The enzyme catalyses deamido-NAD(+) + NH4(+) + ATP = AMP + diphosphate + NAD(+) + H(+). Its pathway is cofactor biosynthesis; NAD(+) biosynthesis; NAD(+) from deamido-NAD(+) (ammonia route): step 1/1. In terms of biological role, catalyzes the ATP-dependent amidation of deamido-NAD to form NAD. Uses ammonia as a nitrogen source. The chain is NH(3)-dependent NAD(+) synthetase from Streptococcus uberis (strain ATCC BAA-854 / 0140J).